The sequence spans 173 residues: Photosystem I assembly protein Ycf3 (173 aa).

3 TPR repeats span residues 35–68, 72–105, and 120–153; these read AYIY…EENK, GETL…NPKQ, and GRNA…YPGG.

This sequence belongs to the Ycf3 family.

The protein resides in the cellular thylakoid membrane. Essential for the assembly of the photosystem I (PSI) complex. May act as a chaperone-like factor to guide the assembly of the PSI subunits. This is Photosystem I assembly protein Ycf3 from Prochlorococcus marinus (strain MIT 9312).